Reading from the N-terminus, the 220-residue chain is UPF0502 protein VV2_0756 (220 aa).

Belongs to the UPF0502 family.

The sequence is that of UPF0502 protein VV2_0756 from Vibrio vulnificus (strain CMCP6).